The primary structure comprises 194 residues: Holliday junction branch migration complex subunit RuvA (194 aa).

A domain I region spans residues Met1–Ala64. The interval Thr65–Gln143 is domain II. Positions Val144–Ser149 are flexible linker. Residues Ser149–Lys194 form a domain III region.

The protein belongs to the RuvA family. In terms of assembly, homotetramer. Forms an RuvA(8)-RuvB(12)-Holliday junction (HJ) complex. HJ DNA is sandwiched between 2 RuvA tetramers; dsDNA enters through RuvA and exits via RuvB. An RuvB hexamer assembles on each DNA strand where it exits the tetramer. Each RuvB hexamer is contacted by two RuvA subunits (via domain III) on 2 adjacent RuvB subunits; this complex drives branch migration. In the full resolvosome a probable DNA-RuvA(4)-RuvB(12)-RuvC(2) complex forms which resolves the HJ.

It localises to the cytoplasm. In terms of biological role, the RuvA-RuvB-RuvC complex processes Holliday junction (HJ) DNA during genetic recombination and DNA repair, while the RuvA-RuvB complex plays an important role in the rescue of blocked DNA replication forks via replication fork reversal (RFR). RuvA specifically binds to HJ cruciform DNA, conferring on it an open structure. The RuvB hexamer acts as an ATP-dependent pump, pulling dsDNA into and through the RuvAB complex. HJ branch migration allows RuvC to scan DNA until it finds its consensus sequence, where it cleaves and resolves the cruciform DNA. This chain is Holliday junction branch migration complex subunit RuvA, found in Dehalococcoides mccartyi (strain CBDB1).